Here is a 743-residue protein sequence, read N- to C-terminus: Glycerol-3-phosphate O-acyltransferase 2 (743 aa).

The Lumenal segment spans residues 1–34 (MSAPAADHNAAKPIPHVPQASRRYKNSYNGFVYN). A helical transmembrane segment spans residues 35 to 55 (IHTWLYDVSVFLFNILFTIFF). The Cytoplasmic segment spans residues 56–442 (REIKVRGAYN…TKLEALRCFV (387 aa)). A helical membrane pass occupies residues 443-457 (TLIVRLIKFSVFAIL). S458 is a topological domain (lumenal). The chain crosses the membrane as a helical span at residues 459–473 (LPGSILFTPIFIICR). Residues 474-501 (VYSEKKAKEGLKKSLVKIKGTDLLATWK) lie on the Cytoplasmic side of the membrane. A helical transmembrane segment spans residues 502–522 (LIVALILAPILYVTYSILLII). Residues 523–531 (LARKQHYCR) are Lumenal-facing. The helical transmembrane segment at 532–552 (IWVPSNNAFIQFVYFYALLVF) threads the bilayer. At 553-743 (TTYSSLKTGE…RQKREHEKKE (191 aa)) the chain is on the cytoplasmic side. 9 positions are modified to phosphoserine: S632, S637, S647, S651, S654, S657, S664, S668, and S671. T673 carries the post-translational modification Phosphothreonine. Residues 682-743 (KQGQWKSEGE…RQKREHEKKE (62 aa)) are disordered. S688 carries the phosphoserine modification. Residues 691–700 (ETSEDEDEFD) show a composition bias toward acidic residues. Residue T692 is modified to Phosphothreonine. Position 693 is a phosphoserine (S693).

Belongs to the GPAT/DAPAT family. In terms of processing, phosphorylated at a conserved motif involving Ser-664, Ser-668 and Ser-671. This phosphorylation plays a critical role for efficient TAG mobilization. Phosphorylation deficiency at this motif increases the enzyme activity and consequently induces de novo formation of phosphatidic acid.

It localises to the lipid droplet. The protein resides in the endoplasmic reticulum membrane. The catalysed reaction is sn-glycerol 3-phosphate + an acyl-CoA = a 1-acyl-sn-glycero-3-phosphate + CoA. It catalyses the reaction dihydroxyacetone phosphate + an acyl-CoA = a 1-acylglycerone 3-phosphate + CoA. The enzyme catalyses sn-glycerol 3-phosphate + hexadecanoyl-CoA = 1-hexadecanoyl-sn-glycero-3-phosphate + CoA. It carries out the reaction (9Z)-hexadecenoyl-CoA + sn-glycerol 3-phosphate = 1-(9Z-hexadecenoyl)-sn-glycero-3-phosphate + CoA. The catalysed reaction is sn-glycerol 3-phosphate + octadecanoyl-CoA = 1-octadecanoyl-sn-glycero-3-phosphate + CoA. It catalyses the reaction sn-glycerol 3-phosphate + (9Z)-octadecenoyl-CoA = 1-(9Z-octadecenoyl)-sn-glycero-3-phosphate + CoA. The protein operates within phospholipid metabolism; CDP-diacylglycerol biosynthesis; CDP-diacylglycerol from sn-glycerol 3-phosphate: step 1/3. Functionally, dual substrate-specific glycerol-3-phosphate/dihydroxyacetone phosphate sn-1 acyltransferase, catalyzing the first and committed reaction in the de novo synthesis of glycerophospholipids and triacylglycerols (TAGs). Can use both Gly-3-P and dihydroxyacetone phosphate with similar efficiencies and has a broad fatty acyl-CoA specificity profile. Transfers a fatty acid from fatty acyl-CoA to the sn-1 position of glycerol-3-phosphate to produce lysophosphatidic acid (LysoPA). These lipids not only are precursors of glycerolipids, but also are dynamic components of signal transduction systems that control cell physiology. The polypeptide is Glycerol-3-phosphate O-acyltransferase 2 (GPT2) (Saccharomyces cerevisiae (strain ATCC 204508 / S288c) (Baker's yeast)).